The chain runs to 123 residues: Large ribosomal subunit protein uL18 (123 aa).

Belongs to the universal ribosomal protein uL18 family. In terms of assembly, part of the 50S ribosomal subunit; part of the 5S rRNA/L5/L18/L25 subcomplex. Contacts the 5S and 23S rRNAs.

Its function is as follows. This is one of the proteins that bind and probably mediate the attachment of the 5S RNA into the large ribosomal subunit, where it forms part of the central protuberance. This Bifidobacterium adolescentis (strain ATCC 15703 / DSM 20083 / NCTC 11814 / E194a) protein is Large ribosomal subunit protein uL18.